A 777-amino-acid chain; its full sequence is Phosphoribosylformylglycinamidine synthase subunit PurL (777 aa).

The active site involves histidine 50. ATP-binding residues include tyrosine 53 and lysine 92. Glutamate 94 serves as a coordination point for Mg(2+). Substrate contacts are provided by residues 95–98 (SHNH) and arginine 117. Histidine 96 functions as the Proton acceptor in the catalytic mechanism. Aspartate 118 lines the Mg(2+) pocket. Position 241 (glutamine 241) interacts with substrate. Aspartate 269 provides a ligand contact to Mg(2+). 313 to 315 (ESQ) contacts substrate. Residues aspartate 516 and glycine 553 each contribute to the ATP site. Asparagine 554 is a Mg(2+) binding site. Serine 556 contacts substrate.

Belongs to the FGAMS family. In terms of assembly, monomer. Part of the FGAM synthase complex composed of 1 PurL, 1 PurQ and 2 PurS subunits.

Its subcellular location is the cytoplasm. It catalyses the reaction N(2)-formyl-N(1)-(5-phospho-beta-D-ribosyl)glycinamide + L-glutamine + ATP + H2O = 2-formamido-N(1)-(5-O-phospho-beta-D-ribosyl)acetamidine + L-glutamate + ADP + phosphate + H(+). It functions in the pathway purine metabolism; IMP biosynthesis via de novo pathway; 5-amino-1-(5-phospho-D-ribosyl)imidazole from N(2)-formyl-N(1)-(5-phospho-D-ribosyl)glycinamide: step 1/2. Part of the phosphoribosylformylglycinamidine synthase complex involved in the purines biosynthetic pathway. Catalyzes the ATP-dependent conversion of formylglycinamide ribonucleotide (FGAR) and glutamine to yield formylglycinamidine ribonucleotide (FGAM) and glutamate. The FGAM synthase complex is composed of three subunits. PurQ produces an ammonia molecule by converting glutamine to glutamate. PurL transfers the ammonia molecule to FGAR to form FGAM in an ATP-dependent manner. PurS interacts with PurQ and PurL and is thought to assist in the transfer of the ammonia molecule from PurQ to PurL. The sequence is that of Phosphoribosylformylglycinamidine synthase subunit PurL from Synechococcus elongatus (strain ATCC 33912 / PCC 7942 / FACHB-805) (Anacystis nidulans R2).